A 289-amino-acid polypeptide reads, in one-letter code: ATP synthase gamma chain (289 aa).

It belongs to the ATPase gamma chain family. In terms of assembly, F-type ATPases have 2 components, CF(1) - the catalytic core - and CF(0) - the membrane proton channel. CF(1) has five subunits: alpha(3), beta(3), gamma(1), delta(1), epsilon(1). CF(0) has three main subunits: a, b and c.

It localises to the cell inner membrane. Functionally, produces ATP from ADP in the presence of a proton gradient across the membrane. The gamma chain is believed to be important in regulating ATPase activity and the flow of protons through the CF(0) complex. The protein is ATP synthase gamma chain of Anaeromyxobacter dehalogenans (strain 2CP-C).